A 510-amino-acid polypeptide reads, in one-letter code: Glutamate decarboxylase (510 aa).

107–109 (QLS) is a binding site for substrate. Position 322 is an N6-(pyridoxal phosphate)lysine (lysine 322). Arginine 483 is a binding site for substrate.

The protein belongs to the group II decarboxylase family. Homodimer. It depends on pyridoxal 5'-phosphate as a cofactor. In terms of tissue distribution, expressed in the head (at protein level).

It carries out the reaction L-glutamate + H(+) = 4-aminobutanoate + CO2. Functionally, catalyzes the production of GABA. This is Glutamate decarboxylase (Gad1) from Drosophila melanogaster (Fruit fly).